A 728-amino-acid polypeptide reads, in one-letter code: Histone demethylase JHD2 (728 aa).

The 44-residue stretch at 4–47 (IPALYPTEQEFKNPIDYLSNPHIKRLGVRYGMVKVVPPNGFCPP) folds into the JmjN domain. Residues 235 to 285 (DDACIVCRKTNDPKRTILCDSCDKPFHIYCLSPPLERVPSGDWICNTCIVG) form a PHD-type zinc finger. One can recognise a JmjC domain in the interval 381-549 (KYCDHPMNLT…YGFGAITDYK (169 aa)). Positions 427, 430, and 517 each coordinate Fe cation.

Belongs to the JARID1 histone demethylase family. Fe(2+) is required as a cofactor.

Its subcellular location is the nucleus. The catalysed reaction is N(6),N(6),N(6)-trimethyl-L-lysyl(4)-[histone H3] + 3 2-oxoglutarate + 3 O2 = L-lysyl(4)-[histone H3] + 3 formaldehyde + 3 succinate + 3 CO2. Its function is as follows. Histone demethylase that demethylates 'Lys-4' of histone H3, thereby playing a central role in histone code. Demethylates trimethylated H3 'Lys-4'. The polypeptide is Histone demethylase JHD2 (JHD2) (Saccharomyces cerevisiae (strain ATCC 204508 / S288c) (Baker's yeast)).